Here is a 423-residue protein sequence, read N- to C-terminus: ATP-citrate synthase alpha chain protein 2 (423 aa).

Positions 343, 345, and 376 each coordinate citrate.

It belongs to the succinate/malate CoA ligase beta subunit family. In terms of assembly, heterooctamer of 4 alpha and 4 beta chains.

It localises to the cytoplasm. It is found in the cytosol. It catalyses the reaction oxaloacetate + acetyl-CoA + ADP + phosphate = citrate + ATP + CoA. ATP citrate-lyase is the primary enzyme responsible for the synthesis of cytosolic acetyl-CoA, used for the elongation of fatty acids and biosynthesis of isoprenoids, flavonoids and malonated derivatives. May supply substrate to the cytosolic acetyl-CoA carboxylase, which generates the malonyl-CoA used for the synthesis of a multitude of compounds, including very long chain fatty acids and flavonoids. In contrast to all known animal ACL enzymes having a homomeric structure, plant ACLs are composed of alpha and beta chains. The sequence is that of ATP-citrate synthase alpha chain protein 2 (ACLA-2) from Oryza sativa subsp. japonica (Rice).